The chain runs to 141 residues: 3-hydroxyacyl-[acyl-carrier-protein] dehydratase FabZ (141 aa).

Residue H48 is part of the active site.

The protein belongs to the thioester dehydratase family. FabZ subfamily.

Its subcellular location is the cytoplasm. The catalysed reaction is a (3R)-hydroxyacyl-[ACP] = a (2E)-enoyl-[ACP] + H2O. Its function is as follows. Involved in unsaturated fatty acids biosynthesis. Catalyzes the dehydration of short chain beta-hydroxyacyl-ACPs and long chain saturated and unsaturated beta-hydroxyacyl-ACPs. The protein is 3-hydroxyacyl-[acyl-carrier-protein] dehydratase FabZ of Bacillus subtilis (strain 168).